Here is a 2439-residue protein sequence, read N- to C-terminus: Centrosomal protein of 290 kDa (2439 aa).

Coiled coils occupy residues 75 to 913 (AEQA…VVTE) and 1271 to 1576 (NTML…YMDT). Disordered stretches follow at residues 1802-1824 (ETLNKDLQRSQKSQNKLQSEKEA), 1867-1890 (ELDRKSISEPADKRSTLKEDKSSK), and 2017-2048 (ESRLSKEPPSRPSTSGRGSDTPSQREHEFQKE). The span at 2039–2048 (SQREHEFQKE) shows a compositional bias: basic and acidic residues. Residues 2046–2394 (QKENLRLSTE…KLTQELKHFD (349 aa)) adopt a coiled-coil conformation.

As to quaternary structure, part of the tectonic-like complex (also named B9 complex).

It is found in the cytoplasm. The protein localises to the cytoskeleton. The protein resides in the microtubule organizing center. Its subcellular location is the centrosome. It localises to the centriolar satellite. It is found in the nucleus. The protein localises to the cilium basal body. In terms of biological role, involved in early and late steps in cilia formation. May play a role in early ciliogenesis in the disappearance of centriolar satellites and in the transition of primary ciliar vesicles (PCVs) to capped ciliary vesicles (CCVs). In the ciliary transition zone is part of the tectonic-like complex which is required for tissue-specific ciliogenesis and may regulate ciliary membrane composition. Involved in regulation of the BBSome complex integrity and in ciliary targeting of selected BBSome cargos. Required for the correct localization of ciliary and phototransduction proteins in retinal photoreceptor cells; may play a role in ciliary transport processes. Involved in development of the nervous system and kidney. This chain is Centrosomal protein of 290 kDa (cep290), found in Danio rerio (Zebrafish).